We begin with the raw amino-acid sequence, 422 residues long: Testin (422 aa).

In terms of domain architecture, PET spans 92–199 (MILTNPVPAK…GDVKLPSEMD (108 aa)). Disordered regions lie at residues 135–162 (QPVA…QDPS) and 194–226 (LPSE…EDKS). A compositionally biased stretch (basic and acidic residues) spans 194-212 (LPSEMDVKPGDRSSLDGGD). LIM zinc-binding domains lie at 234-297 (YSCY…CDSE), 299-359 (PRCA…NHAV), and 362-422 (QGCH…MMMS).

This sequence belongs to the prickle / espinas / testin family. Interacts via LIM domain 1 with ZYX. Interacts (via LIM domain 3) with ENAH and VASP. Interacts with ALKBH4, talin, actin, alpha-actinin, GRIP1 and PXN. Interacts (via LIM domain 2) with ACTL7A (via N-terminus). Heterodimer with ACTL7A; the heterodimer interacts with ENAH to form a heterotrimer.

It is found in the cytoplasm. It localises to the cell junction. The protein localises to the focal adhesion. Scaffold protein that may play a role in cell adhesion, cell spreading and in the reorganization of the actin cytoskeleton. Plays a role in the regulation of cell proliferation. May act as a tumor suppressor. This chain is Testin (TES), found in Monodelphis domestica (Gray short-tailed opossum).